The sequence spans 448 residues: MSKKIVTIIDVKNYVGQEVTIGAWVANKSGKGKIAFLQLRDGSAFFQGVAFKPNFIEKFGEEEGLAKFDTIKKLSQETSVYVTGVVKEDERSKFGYELDITDIEIIGESNDYPITPKEHGTDFLMDNRHLWLRSRKQVAMMQIRNAIIYATYEFFDKNGFMKFDSPILSGNAAEDSTELFETDYFGTPAYLSQSGQLYLEAGAMALGRVFDFGPVFRAEKSKTRRHLTEFWMMDAEYSYLTHDESLDLQEAYVKALIQGVLDRAPQALETLERDVELLKRYIAEPFKRVSYDEAIDLLQAHENDEDADYEHLEHGDDFGSPHETWISNHFGVPTFVVNYPAAIKAFYMKPVPGNPDRVLCADLLAPEGYGEIIGGSMREEDYDALVAKMNDLGMDTTEYEFYLDLRKYGTVPHGGFGIGIERMVTFVAGTKHIREAIPFPRMLHRIKP.

Belongs to the class-II aminoacyl-tRNA synthetase family. As to quaternary structure, homodimer.

The protein localises to the cytoplasm. The catalysed reaction is tRNA(Asn) + L-asparagine + ATP = L-asparaginyl-tRNA(Asn) + AMP + diphosphate + H(+). The sequence is that of Asparagine--tRNA ligase from Streptococcus sanguinis (strain SK36).